The chain runs to 261 residues: Yop proteins translocation protein T (261 aa).

A run of 7 helical transmembrane segments spans residues 20–40 (FMAC…GVLL), 44–64 (IVCS…YIEV), 77–97 (IILG…LESA), 131–151 (TLIT…ALFH), 180–200 (ILLI…LAEF), 214–234 (VFVL…VIYC), and 239–259 (SHAS…IPVL).

It belongs to the FliR/MopE/SpaR family.

It localises to the cell membrane. Its function is as follows. Component of the yop secretion machinery. This chain is Yop proteins translocation protein T (yscT), found in Yersinia pestis.